Consider the following 148-residue polypeptide: Ribonuclease pancreatic (148 aa).

The first 25 residues, 1-25 (MGLEKSLILLPLLVLVFGWVQPSLG), serve as a signal peptide directing secretion. Substrate-binding residues include Lys-32 and Arg-35. His-37 acts as the Proton acceptor in catalysis. Disulfide bonds link Cys-50–Cys-108, Cys-64–Cys-119, Cys-82–Cys-134, and Cys-89–Cys-96. Asn-58 carries N-linked (GlcNAc...) asparagine glycosylation. 65–69 (KPVNT) serves as a coordination point for substrate. Asn-86 carries an N-linked (GlcNAc...) asparagine glycan. Residues Lys-90 and Arg-109 each coordinate substrate. The active-site Proton donor is His-143.

This sequence belongs to the pancreatic ribonuclease family. As to quaternary structure, monomer. Interacts with and forms tight 1:1 complexes with RNH1. Dimerization of two such complexes may occur. Interaction with RNH1 inhibits this protein. Pancreas.

It is found in the secreted. It catalyses the reaction an [RNA] containing cytidine + H2O = an [RNA]-3'-cytidine-3'-phosphate + a 5'-hydroxy-ribonucleotide-3'-[RNA].. It carries out the reaction an [RNA] containing uridine + H2O = an [RNA]-3'-uridine-3'-phosphate + a 5'-hydroxy-ribonucleotide-3'-[RNA].. Its function is as follows. Endonuclease that catalyzes the cleavage of RNA on the 3' side of pyrimidine nucleotides. Acts on single-stranded and double-stranded RNA. This chain is Ribonuclease pancreatic (RNASE1), found in Myodes glareolus (Bank vole).